Consider the following 778-residue polypeptide: E3 UFM1-protein ligase 1 homolog (778 aa).

A disordered region spans residues 404 to 477; the sequence is NNLSTSHDAD…TVQQSAGNTR (74 aa). The segment covering 445–457 has biased composition (basic residues); the sequence is KSTKKHQRGRAAA.

Belongs to the UFL1 family.

E3 UFM1-protein ligase that mediates ufmylation of target proteins. The chain is E3 UFM1-protein ligase 1 homolog from Drosophila virilis (Fruit fly).